A 212-amino-acid polypeptide reads, in one-letter code: Thymidylate kinase (212 aa).

An ATP-binding site is contributed by 11–18 (GPEGAGKT).

Belongs to the thymidylate kinase family.

It carries out the reaction dTMP + ATP = dTDP + ADP. Functionally, phosphorylation of dTMP to form dTDP in both de novo and salvage pathways of dTTP synthesis. The sequence is that of Thymidylate kinase from Streptococcus pneumoniae (strain CGSP14).